The following is a 250-amino-acid chain: MADS-box transcription factor 47 (250 aa).

Gly residues predominate over residues 1–10 (MAGGGGGGGR). Disordered regions lie at residues 1 to 20 (MAGG…AATG) and 196 to 250 (SRME…FSSK). The segment covering 11-20 (GEGEGRAATG) has biased composition (basic and acidic residues). In terms of domain architecture, MADS-box spans 20-80 (GKRERIAIRR…GKLFQFASTS (61 aa)). Residues 106 to 198 (QGEDSSTCAR…QLQVSRMSRM (93 aa)) form the K-box domain. Positions 214 to 224 (GQSSESVTNAS) are enriched in polar residues.

May interact with MADS18. In terms of tissue distribution, expressed in roots, shoots and developing panicles. Expressed in mature stems and leaves, flowering panicles, developing seeds, and mature seeds.

It is found in the nucleus. In terms of biological role, transcription factor that modulates expressions of multiple genes involved in cell signaling and gene transcription. Plays a negative regulatory role in brassinosteroid signaling. This Oryza sativa subsp. japonica (Rice) protein is MADS-box transcription factor 47.